The following is a 180-amino-acid chain: ATP synthase subunit delta (180 aa).

It belongs to the ATPase delta chain family. In terms of assembly, F-type ATPases have 2 components, F(1) - the catalytic core - and F(0) - the membrane proton channel. F(1) has five subunits: alpha(3), beta(3), gamma(1), delta(1), epsilon(1). F(0) has three main subunits: a(1), b(2) and c(10-14). The alpha and beta chains form an alternating ring which encloses part of the gamma chain. F(1) is attached to F(0) by a central stalk formed by the gamma and epsilon chains, while a peripheral stalk is formed by the delta and b chains.

The protein localises to the cell membrane. F(1)F(0) ATP synthase produces ATP from ADP in the presence of a proton or sodium gradient. F-type ATPases consist of two structural domains, F(1) containing the extramembraneous catalytic core and F(0) containing the membrane proton channel, linked together by a central stalk and a peripheral stalk. During catalysis, ATP synthesis in the catalytic domain of F(1) is coupled via a rotary mechanism of the central stalk subunits to proton translocation. Its function is as follows. This protein is part of the stalk that links CF(0) to CF(1). It either transmits conformational changes from CF(0) to CF(1) or is implicated in proton conduction. In Alkaliphilus oremlandii (strain OhILAs) (Clostridium oremlandii (strain OhILAs)), this protein is ATP synthase subunit delta.